The primary structure comprises 100 residues: Urease subunit gamma (100 aa).

This sequence belongs to the urease gamma subunit family. In terms of assembly, probable heterotrimer of UreA (gamma), UreB (beta) and UreC (alpha) subunits. Three heterotrimers associate to form the active enzyme. The trimeric urease interacts with an accessory complex composed of UreD, UreF and UreG, which is required for the assembly of the nickel containing metallocenter of UreC. The UreE protein may also play a direct role in nickel transfer to the urease apoprotein.

Its subcellular location is the cytoplasm. The enzyme catalyses urea + 2 H2O + H(+) = hydrogencarbonate + 2 NH4(+). The protein operates within nitrogen metabolism; urea degradation; CO(2) and NH(3) from urea (urease route): step 1/1. This chain is Urease subunit gamma, found in Proteus mirabilis (strain HI4320).